Reading from the N-terminus, the 367-residue chain is Quinolinate synthase (367 aa).

Residues histidine 45 and serine 62 each contribute to the iminosuccinate site. Cysteine 109 provides a ligand contact to [4Fe-4S] cluster. Residues 140 to 142 (YVN) and serine 161 each bind iminosuccinate. Cysteine 229 serves as a coordination point for [4Fe-4S] cluster. Residues 255–257 (HPE) and threonine 272 each bind iminosuccinate. Cysteine 319 is a [4Fe-4S] cluster binding site.

It belongs to the quinolinate synthase family. Type 3 subfamily. The cofactor is [4Fe-4S] cluster.

The protein resides in the cytoplasm. It catalyses the reaction iminosuccinate + dihydroxyacetone phosphate = quinolinate + phosphate + 2 H2O + H(+). It participates in cofactor biosynthesis; NAD(+) biosynthesis; quinolinate from iminoaspartate: step 1/1. Catalyzes the condensation of iminoaspartate with dihydroxyacetone phosphate to form quinolinate. The protein is Quinolinate synthase of Halalkalibacterium halodurans (strain ATCC BAA-125 / DSM 18197 / FERM 7344 / JCM 9153 / C-125) (Bacillus halodurans).